The sequence spans 344 residues: uncharacterized protein (344 aa).

NADP(+)-binding residues include K38 and Y167.

It belongs to the NAD(P)-dependent epimerase/dehydratase family. Dihydroflavonol-4-reductase subfamily.

This is an uncharacterized protein from Saccharomyces cerevisiae (strain ATCC 204508 / S288c) (Baker's yeast).